The primary structure comprises 798 residues: Penicillin-binding protein 1A (798 aa).

Topologically, residues 1–9 (MIKKIITTC) are cytoplasmic. The chain crosses the membrane as a helical; Signal-anchor for type II membrane protein span at residues 10–30 (MGLNNGLALFGVGLIAIAILV). The Periplasmic segment spans residues 31–798 (TYPKLPSLDS…NNRQQLDSLF (768 aa)). The interval 50-218 (LTIYSSDGQV…SAYNPIVNPE (169 aa)) is transglycosylase. Glutamate 88 acts as the Proton donor; for transglycosylase activity in catalysis. The segment at 413–699 (TVVQEPLLQG…GTIAVPVWVE (287 aa)) is transpeptidase. Residue serine 460 is the Acyl-ester intermediate; for transpeptidase activity of the active site. Residues 734 to 798 (TSSDLALDNS…NNRQQLDSLF (65 aa)) are disordered. Residues 782–798 (LPSNTGNNNRQQLDSLF) show a composition bias toward polar residues.

In the N-terminal section; belongs to the glycosyltransferase 51 family. This sequence in the C-terminal section; belongs to the transpeptidase family.

The protein localises to the cell inner membrane. The enzyme catalyses [GlcNAc-(1-&gt;4)-Mur2Ac(oyl-L-Ala-gamma-D-Glu-L-Lys-D-Ala-D-Ala)](n)-di-trans,octa-cis-undecaprenyl diphosphate + beta-D-GlcNAc-(1-&gt;4)-Mur2Ac(oyl-L-Ala-gamma-D-Glu-L-Lys-D-Ala-D-Ala)-di-trans,octa-cis-undecaprenyl diphosphate = [GlcNAc-(1-&gt;4)-Mur2Ac(oyl-L-Ala-gamma-D-Glu-L-Lys-D-Ala-D-Ala)](n+1)-di-trans,octa-cis-undecaprenyl diphosphate + di-trans,octa-cis-undecaprenyl diphosphate + H(+). The catalysed reaction is Preferential cleavage: (Ac)2-L-Lys-D-Ala-|-D-Ala. Also transpeptidation of peptidyl-alanyl moieties that are N-acyl substituents of D-alanine.. It functions in the pathway cell wall biogenesis; peptidoglycan biosynthesis. In terms of biological role, cell wall formation. Synthesis of cross-linked peptidoglycan from the lipid intermediates. The enzyme has a penicillin-insensitive transglycosylase N-terminal domain (formation of linear glycan strands) and a penicillin-sensitive transpeptidase C-terminal domain (cross-linking of the peptide subunits). This is Penicillin-binding protein 1A (mrcA) from Neisseria flavescens.